A 63-amino-acid chain; its full sequence is Large ribosomal subunit protein uL30 (63 aa).

The protein belongs to the universal ribosomal protein uL30 family. In terms of assembly, part of the 50S ribosomal subunit.

This Rickettsia africae (strain ESF-5) protein is Large ribosomal subunit protein uL30.